The sequence spans 442 residues: SPRY domain-containing protein 3 (442 aa).

In terms of domain architecture, B30.2/SPRY spans 17 to 204 (DLNLHYRFLN…VRLHLNAELG (188 aa)). The segment at 371-394 (EGEEEEEEEEEEEDGEEIEPEHEG) is disordered. Acidic residues predominate over residues 372-390 (GEEEEEEEEEEEDGEEIEP).

The chain is SPRY domain-containing protein 3 (SPRYD3) from Homo sapiens (Human).